The following is a 64-amino-acid chain: Long neurotoxin MS5 (64 aa).

5 disulfides stabilise this stretch: Cys3-Cys24, Cys6-Cys11, Cys17-Cys41, Cys45-Cys57, and Cys58-Cys63.

Belongs to the three-finger toxin family. Ancestral subfamily. As to expression, expressed by the venom gland.

It is found in the secreted. In terms of biological role, produces peripheral paralysis by blocking neuromuscular transmission at the postsynaptic site. Very weak inhibitor of the endogenous nicotinic acetylcholine receptors (nAChR) in the human rhabdomyosarcoma TE 671 cell line. This neurotoxin is lethal to zebrafish by injection at the back of the dorsolateral region, but is not toxic to mice by intraperitoneal injection. The chain is Long neurotoxin MS5 from Micrurus surinamensis (Surinam coral snake).